The primary structure comprises 101 residues: Large ribosomal subunit protein uL23 (101 aa).

It belongs to the universal ribosomal protein uL23 family. As to quaternary structure, part of the 50S ribosomal subunit. Contacts protein L29, and trigger factor when it is bound to the ribosome.

One of the early assembly proteins it binds 23S rRNA. One of the proteins that surrounds the polypeptide exit tunnel on the outside of the ribosome. Forms the main docking site for trigger factor binding to the ribosome. The protein is Large ribosomal subunit protein uL23 of Tolumonas auensis (strain DSM 9187 / NBRC 110442 / TA 4).